The sequence spans 91 residues: Probable Fe(2+)-trafficking protein (91 aa).

This sequence belongs to the Fe(2+)-trafficking protein family.

Functionally, could be a mediator in iron transactions between iron acquisition and iron-requiring processes, such as synthesis and/or repair of Fe-S clusters in biosynthetic enzymes. The polypeptide is Probable Fe(2+)-trafficking protein (Acidobacterium capsulatum (strain ATCC 51196 / DSM 11244 / BCRC 80197 / JCM 7670 / NBRC 15755 / NCIMB 13165 / 161)).